Here is a 357-residue protein sequence, read N- to C-terminus: Dehydrogenase FUB6 (357 aa).

Belongs to the zinc-containing alcohol dehydrogenase family. Quinone oxidoreductase subfamily.

The protein operates within mycotoxin biosynthesis. Dehydrogenase; part of the gene cluster that mediates the biosynthesis of fusaric acid, a mycotoxin with low to moderate toxicity to animals and humans, but with high phytotoxic properties. L-aspartate is suggested as fusaric acid amino acid precursor that is activated and further processed to O-acetyl-L-homoserine by cluster enzymes aspartate kinase FUB3 and homoserine O-acetyltransferase FUB5, as well as enzymes of the primary metabolism. The polyketide synthase (PKS) FUB1 generates the triketide trans-2-hexenal which is presumptively released by the hydrolase FUB4 and linked to the NRPS-bound amino acid precursor by NAD(P)-dependent dehydrogenase FUB6. FUB1, FUB4, and the non-canonical NRPS Fub8 may form an enzyme complex. Further processing of the NRPS-bound intermediate might be carried out by FUB6 and the O-acetylhomoserine FUB7, enabling a spontaneous electrocyclization to close the carbon backbone of fusaric acid. Dihydrofusaric acid is likely to be released via reduction by the thioester reductase (TR) domain of FUB8 whereupon the final oxidation to fusaric acid may (also) be performed by the FMN-dependent dehydrogenase FUB9. The protein is Dehydrogenase FUB6 of Gibberella moniliformis (strain M3125 / FGSC 7600) (Maize ear and stalk rot fungus).